Consider the following 478-residue polypeptide: Cytochrome c-552 (478 aa).

The N-terminal stretch at 1–26 (MARKTLRARRFFSLIFPFFFITSVYA) is a signal peptide. H94 contacts heme c. Residues C122, C125, and K126 each coordinate heme. Residues C160, C163, H164, C209, C212, and H213 each contribute to the heme c site. E215, Y216, K261, and Q263 together coordinate Ca(2+). Y216 serves as a coordination point for substrate. H264 provides a ligand contact to substrate. Residues H275, C282, C285, H286, H301, C314, C317, H318, and H393 each contribute to the heme c site.

The protein belongs to the cytochrome c-552 family. Ca(2+) is required as a cofactor. The cofactor is heme c.

It is found in the periplasm. The enzyme catalyses 6 Fe(III)-[cytochrome c] + NH4(+) + 2 H2O = 6 Fe(II)-[cytochrome c] + nitrite + 8 H(+). Its pathway is nitrogen metabolism; nitrate reduction (assimilation). Functionally, catalyzes the reduction of nitrite to ammonia, consuming six electrons in the process. This Salmonella gallinarum (strain 287/91 / NCTC 13346) protein is Cytochrome c-552.